A 553-amino-acid polypeptide reads, in one-letter code: Ribonuclease J 2 (553 aa).

Zn(2+) is bound by residues histidine 69, histidine 71, histidine 138, and aspartate 160. Residue 361-365 (RVSGH) participates in substrate binding.

Belongs to the metallo-beta-lactamase superfamily. RNA-metabolizing metallo-beta-lactamase-like family. Bacterial RNase J subfamily. In terms of assembly, homodimer, may be a subunit of the RNA degradosome. Zn(2+) is required as a cofactor.

It localises to the cytoplasm. Functionally, an RNase that has 5'-3' exonuclease and possibly endonuclease activity. Involved in maturation of rRNA and in some organisms also mRNA maturation and/or decay. Has an overlapping but not completely redundant role with RNase J1 in the decay of mRNA. This is Ribonuclease J 2 from Streptococcus pyogenes serotype M3 (strain ATCC BAA-595 / MGAS315).